The chain runs to 292 residues: MKDRLPELKQRTKETELSKDKDVPTTEAEEQGVFLQQAVIYEREPVAERHLHEIQKLQESINNLTDNVQKFGQQQKSLVASMRRFSLLKKESSIAKEIKIQAEHINRGLDDLVKEVKKSEDESGPSSVVTRILKFQHAAMFRHFQQTMFTYNDTIAAKQEKCRTFIFRQLEVAGKELPEEEVNDMLHQGKWEVFNESLLTEISITKAQLSEIEQRHKELVNLENQIKDLRDLFIQISLLVEEQGESVNSIEMIVNGTKEYVNTTKEKFGLAVKYKKRNPCKILCCWCCPCCG.

The span at 1–24 (MKDRLPELKQRTKETELSKDKDVP) shows a compositional bias: basic and acidic residues. Residues 1-28 (MKDRLPELKQRTKETELSKDKDVPTTEA) are disordered. Residues 46-122 (VAERHLHEIQ…VKEVKKSEDE (77 aa)) are a coiled coil. Residues 209–271 (LSEIEQRHKE…NTTKEKFGLA (63 aa)) form the t-SNARE coiled-coil homology domain.

This sequence belongs to the syntaxin family. Interacts with EGFR.

It localises to the cell membrane. The protein localises to the cytoplasm. Its function is as follows. Plays a role in endosomal trafficking of the epidermal growth factor receptor (EGFR). The protein is Syntaxin-19 (STX19) of Bos taurus (Bovine).